We begin with the raw amino-acid sequence, 427 residues long: Lactadherin (427 aa).

The signal sequence occupies residues 1 to 22 (MQFSRVLAALCGVLLCASGLFA). EGF-like domains follow at residues 24–61 (SGDF…LVCN) and 64–108 (EKGP…IHCE). Disulfide bonds link C28–C39, C33–C49, and C51–C60. N-linked (GlcNAc...) asparagine glycosylation is present at N61. 6 disulfides stabilise this stretch: C68/C79, C73/C96, C98/C107, C111/C267, C254/C258, and C272/C427. The Cell attachment site motif lies at 87-89 (RGD). F5/8 type C domains follow at residues 111–267 (CSTK…LLGC) and 272–427 (CSEP…LLGC). N-linked (GlcNAc...) asparagine glycosylation occurs at N230. N-linked (GlcNAc...) asparagine glycosylation is found at N280 and N390.

As to expression, spleen, lung, heart, brain and muscle.

It localises to the membrane. The protein localises to the secreted. Its subcellular location is the cytoplasmic vesicle. The protein resides in the secretory vesicle. It is found in the acrosome membrane. Contributes to phagocytic removal of apoptotic cells in many tissues. Plays an important role in the maintenance of intestinal epithelial homeostasis and the promotion of mucosal healing. Promotes VEGF-dependent neovascularization. Specific ligand for the alpha-v/beta-3 and alpha-v/beta-5 receptors. Also binds to phosphatidylserine-enriched cell surfaces in a receptor-independent manner. Zona pellucida-binding protein which may play a role in gamete interaction. Appears to participate in the O-acetylation of GD3 ganglioside sialic acid. The protein is Lactadherin (Mfge8) of Rattus norvegicus (Rat).